Consider the following 100-residue polypeptide: Large ribosomal subunit protein eL30 (100 aa).

Belongs to the eukaryotic ribosomal protein eL30 family.

This chain is Large ribosomal subunit protein eL30 (rpl30e), found in Aeropyrum pernix (strain ATCC 700893 / DSM 11879 / JCM 9820 / NBRC 100138 / K1).